A 191-amino-acid chain; its full sequence is Cell division protein SepF (191 aa).

The interval 150-191 (TSSSPEEASPSSVSPKNTPQYSVENNTAPEPAWGNSKLSAFS) is disordered. Low complexity predominate over residues 151-164 (SSSPEEASPSSVSP). The span at 165-177 (KNTPQYSVENNTA) shows a compositional bias: polar residues.

The protein belongs to the SepF family. In terms of assembly, homodimer. Interacts with FtsZ.

Its subcellular location is the cytoplasm. Cell division protein that is part of the divisome complex and is recruited early to the Z-ring. Probably stimulates Z-ring formation, perhaps through the cross-linking of FtsZ protofilaments. Its function overlaps with FtsA. The sequence is that of Cell division protein SepF from Prochlorococcus marinus (strain MIT 9312).